The chain runs to 196 residues: ATP-dependent Clp protease proteolytic subunit (196 aa).

Ser96 (nucleophile) is an active-site residue. Residue His121 is part of the active site.

The protein belongs to the peptidase S14 family. In terms of assembly, fourteen ClpP subunits assemble into 2 heptameric rings which stack back to back to give a disk-like structure with a central cavity, resembling the structure of eukaryotic proteasomes.

The protein localises to the cytoplasm. The enzyme catalyses Hydrolysis of proteins to small peptides in the presence of ATP and magnesium. alpha-casein is the usual test substrate. In the absence of ATP, only oligopeptides shorter than five residues are hydrolyzed (such as succinyl-Leu-Tyr-|-NHMec, and Leu-Tyr-Leu-|-Tyr-Trp, in which cleavage of the -Tyr-|-Leu- and -Tyr-|-Trp bonds also occurs).. Cleaves peptides in various proteins in a process that requires ATP hydrolysis. Has a chymotrypsin-like activity. Plays a major role in the degradation of misfolded proteins. The sequence is that of ATP-dependent Clp protease proteolytic subunit from Streptococcus uberis (strain ATCC BAA-854 / 0140J).